The following is a 150-amino-acid chain: Protein ADM2 (150 aa).

The N-terminal stretch at Met1 to Ser25 is a signal peptide. Residues Gly26–Ser100 constitute a propeptide that is removed on maturation. The tract at residues Leu28 to Arg102 is disordered. Cysteines 112 and 117 form a disulfide. Tyr149 bears the Tyrosine amide mark.

The protein belongs to the adrenomedullin family. High expression detected in the submaxillary gland, kidney, stomach, and mesentery, followed by the pituitary, lung, pancreas, intestines, spleen, thymus and ovary. Expressed mainly in the intermediate lobe of the pituitary, with sporadic in the anterior lobe.

It is found in the secreted. In terms of biological role, intermedin/ADM2 is a peptide hormone that plays a role as physiological regulator of gastrointestinal and cardiovascular bioactivities mediated by the CALCRL-RAMPs receptor complexes. Activates the cAMP-dependent pathway through interaction with CALCRL-RAMP3 receptor complex. The protein is Protein ADM2 of Mus musculus (Mouse).